Here is a 220-residue protein sequence, read N- to C-terminus: Heptaprenyl diphosphate synthase component 1 (220 aa).

As to quaternary structure, heterodimer of component I and II.

It carries out the reaction 4 isopentenyl diphosphate + (2E,6E)-farnesyl diphosphate = all-trans-heptaprenyl diphosphate + 4 diphosphate. In terms of biological role, supplies heptaprenyl diphosphate, the precursor for the side chain of the isoprenoid quinone menaquinone-7 (MQ-7). This Geobacillus stearothermophilus (Bacillus stearothermophilus) protein is Heptaprenyl diphosphate synthase component 1 (hepS).